Here is a 397-residue protein sequence, read N- to C-terminus: Mesoderm posterior protein 2 (397 aa).

Disordered regions lie at residues 28–92, 152–208, 222–295, and 351–376; these read WDST…REKL, QRGD…GRRP, SPSA…VPWT, and PNSEDQGPGAAFQLSEASPPQSSGLR. Composition is skewed to low complexity over residues 32–48 and 58–71; these read SPASSSDSSGSCPCDGA and SCSSRAAEAAATTP. The bHLH domain occupies 81–135; that stretch reads GQRQSASEREKLRMRTLARALHELRRFLPPSLAPAGQSLTKIETLRLAIRYIGHL. A run of 13 repeats spans residues 179-180, 181-182, 183-184, 185-186, 187-188, 189-190, 191-192, 193-194, 195-196, 197-198, 199-200, 201-202, and 203-204. A 13 X 2 AA tandem repeats of G-Q region spans residues 179–204; it reads GQGQGQGQGQGQGQGQGQGQGQGQGQ. Residues 180 to 206 show a composition bias toward gly residues; that stretch reads QGQGQGQGQGQGQGQGQGQGQGQGQGR. The segment covering 235–244 has biased composition (basic and acidic residues); sequence RLGRGVHDTD. 2 stretches are compositionally biased toward polar residues: residues 258-270 and 365-375; these read PPYSSQGTTSDAS and SEASPPQSSGL.

In terms of processing, degraded by the proteasome.

The protein resides in the nucleus. In terms of biological role, transcription factor with important role in somitogenesis. Defines the rostrocaudal patterning of the somite by participating in distinct Notch pathways. Also regulates the FGF signaling pathway. Specifies the rostral half of the somites. Generates rostro-caudal polarity of somites by down-regulating in the presumptive rostral domain DLL1, a Notch ligand. Participates in the segment border formation by activating in the anterior presomitic mesoderm LFNG, a negative regulator of DLL1-Notch signaling. Acts as a strong suppressor of Notch activity. Together with MESP1 is involved in the epithelialization of somitic mesoderm and in the development of cardiac mesoderm. The chain is Mesoderm posterior protein 2 (MESP2) from Homo sapiens (Human).